Reading from the N-terminus, the 312-residue chain is Protoheme IX farnesyltransferase (312 aa).

Topologically, residues Met-1 to Leu-36 are cytoplasmic. A helical transmembrane segment spans residues Ala-37–Leu-55. Over Ala-56–Asp-69 the chain is Extracellular. Residues Thr-70–Leu-88 form a helical membrane-spanning segment. Topologically, residues Asn-89–Thr-110 are cytoplasmic. Residues Gly-111 to Gly-129 traverse the membrane as a helical segment. The Extracellular segment spans residues Ile-130–Pro-138. A helical transmembrane segment spans residues Thr-139–Met-157. Over Trp-158 to Pro-228 the chain is Cytoplasmic. Residues Val-229–Leu-247 form a helical membrane-spanning segment. Residues Leu-248–Leu-259 are Extracellular-facing. The chain crosses the membrane as a helical span at residues Val-260 to Leu-275. Topologically, residues Gly-276–Ser-296 are cytoplasmic. Residues Leu-297–Met-307 traverse the membrane as a helical segment. Residues Val-308–Phe-312 lie on the Extracellular side of the membrane.

It belongs to the UbiA prenyltransferase family.

The protein localises to the cell membrane. The enzyme catalyses heme b + (2E,6E)-farnesyl diphosphate + H2O = Fe(II)-heme o + diphosphate. Its pathway is porphyrin-containing compound metabolism; heme O biosynthesis; heme O from protoheme: step 1/1. In terms of biological role, converts protoheme IX and farnesyl diphosphate to heme O. The protein is Protoheme IX farnesyltransferase (ctaB) of Alkalihalophilus pseudofirmus (strain ATCC BAA-2126 / JCM 17055 / OF4) (Bacillus pseudofirmus).